The following is a 563-amino-acid chain: Membrane protein insertase YidC (563 aa).

Residues 6–26 traverse the membrane as a helical segment; it reads TVLWMIFSFSLLLLWNNWQIH. Positions 36 to 70 are disordered; sequence PAPEAAATQQPKADANGTAASSTASIPSSPAAAPA. The span at 54-70 shows a compositional bias: low complexity; the sequence is AASSTASIPSSPAAAPA. The next 4 helical transmembrane spans lie at 373 to 393, 443 to 463, 482 to 502, and 512 to 532; these read WGWTIVALTVIIKAVFFPLAA, LPMVVQIPVFIALYWVLLASV, PFFILPAIMMATMFLQIKLNP, and VMMIMPLVFGGMMFFFPAGLV.

The protein belongs to the OXA1/ALB3/YidC family. Type 1 subfamily. In terms of assembly, interacts with the Sec translocase complex via SecD. Specifically interacts with transmembrane segments of nascent integral membrane proteins during membrane integration.

The protein resides in the cell membrane. In terms of biological role, required for the insertion and/or proper folding and/or complex formation of integral membrane proteins into the membrane. Involved in integration of membrane proteins that insert both dependently and independently of the Sec translocase complex, as well as at least some lipoproteins. Aids folding of multispanning membrane proteins. The chain is Membrane protein insertase YidC from Bordetella bronchiseptica (strain ATCC BAA-588 / NCTC 13252 / RB50) (Alcaligenes bronchisepticus).